Here is an 84-residue protein sequence, read N- to C-terminus: U-scoloptoxin(10)-Er1a (84 aa).

The N-terminal stretch at 1 to 24 (MSRFCLLFVAFGFVLYFLHMEVTG) is a signal peptide.

It belongs to the scoloptoxin-10 family. In terms of processing, contains 3 disulfide bonds. Expressed by the venom gland.

Its subcellular location is the secreted. This Ethmostigmus rubripes (Giant centipede) protein is U-scoloptoxin(10)-Er1a.